The sequence spans 493 residues: MTLVNKFVTHVISESSFEEMDRIYLTNRVLARVGEGVLEVETNLDKLIDLKDQLVEEAVRLETIEDSQTAREILGAELMDLVTPCPSQVNRDFWATYAHSPEQAIEDFYQLSQKNDYIKLKAIARNIAYRVPSDYGELEITINLSKPEKDPKEIVAAKLVQASNYPQCQLCLENEGYHGRVNHPARSNHRIIRFEMVGQEWGFQYSPYAYFNEHCIFLDGQHRPMAISRQSFERLLAIVDQFPGYFAGSNADLPIVGGSILTHDHYQGGRHVFPMELAPLQKAFRFAGFEQVKAGIVKWPMSVLRLTSDSKEDLINLADKILQEWRQYSDPAVQILAETDRTPHHTITPIARKRDGQFELDLVLRDNQTSAEYPDGIYHPHKDVQHIKKENIGLIEVMGLAILPPRLKEEVEQVASYLVGEAVTVADYHQEWADQLKSQHPDLTDKEKALAIVKDSVGAIFARVLEDAGVYKQTEQGQTAFMRFVEQVGILLD.

This sequence belongs to the galactose-1-phosphate uridylyltransferase type 2 family.

It is found in the cytoplasm. It catalyses the reaction alpha-D-galactose 1-phosphate + UDP-alpha-D-glucose = alpha-D-glucose 1-phosphate + UDP-alpha-D-galactose. Its pathway is carbohydrate metabolism; galactose metabolism. In Streptococcus pneumoniae serotype 4 (strain ATCC BAA-334 / TIGR4), this protein is Galactose-1-phosphate uridylyltransferase 2 (galT2).